The following is an 87-amino-acid chain: Antitoxin RelB1 (87 aa).

Antitoxin component of a type II toxin-antitoxin (TA) system. Neutralizes the effect of cognate toxin RelE1, but no other RelE or ParE toxin. The sequence is that of Antitoxin RelB1 (relB1) from Caulobacter vibrioides (strain ATCC 19089 / CIP 103742 / CB 15) (Caulobacter crescentus).